We begin with the raw amino-acid sequence, 293 residues long: Acetylglutamate kinase (293 aa).

Substrate contacts are provided by residues 70–71 (GG), Arg-92, and Asn-186.

This sequence belongs to the acetylglutamate kinase family. ArgB subfamily.

Its subcellular location is the cytoplasm. It carries out the reaction N-acetyl-L-glutamate + ATP = N-acetyl-L-glutamyl 5-phosphate + ADP. The protein operates within amino-acid biosynthesis; L-arginine biosynthesis; N(2)-acetyl-L-ornithine from L-glutamate: step 2/4. Its function is as follows. Catalyzes the ATP-dependent phosphorylation of N-acetyl-L-glutamate. The protein is Acetylglutamate kinase of Synechococcus sp. (strain CC9605).